Reading from the N-terminus, the 127-residue chain is PanD regulatory factor (127 aa).

The N-acetyltransferase domain maps to 1–127; that stretch reads MKLTILRLEH…TAQHDGWEKR (127 aa). CoA-binding positions include 66-68 and 72-79; these read LRV and TRRRGVGQ.

The protein belongs to the PanZ/PanM family. Interacts with PanD in the presence of CoA. Monomer.

Controls both the activation and catalytic activity of PanD in a coenzyme A (CoA)-dependent fashion. Binding of CoA or a derivative to PanM leads to interaction with PanD, which promotes the processing and activation of pro-PanD, and subsequent substrate-mediated inhibition of the active form of PanD. Lacks acetyltransferase activity. The protein is PanD regulatory factor of Salmonella typhimurium (strain LT2 / SGSC1412 / ATCC 700720).